The sequence spans 399 residues: uncharacterized protein (399 aa).

The protein belongs to the NADH:flavin oxidoreductase/NADH oxidase family. In terms of assembly, directly interacts with lipoylated GcvH-L (SpyM50867).

This is an uncharacterized protein from Streptococcus pyogenes serotype M5 (strain Manfredo).